The chain runs to 199 residues: Probable nicotinate-nucleotide adenylyltransferase (199 aa).

This sequence belongs to the NadD family.

The catalysed reaction is nicotinate beta-D-ribonucleotide + ATP + H(+) = deamido-NAD(+) + diphosphate. It functions in the pathway cofactor biosynthesis; NAD(+) biosynthesis; deamido-NAD(+) from nicotinate D-ribonucleotide: step 1/1. In terms of biological role, catalyzes the reversible adenylation of nicotinate mononucleotide (NaMN) to nicotinic acid adenine dinucleotide (NaAD). This is Probable nicotinate-nucleotide adenylyltransferase from Leptospira interrogans serogroup Icterohaemorrhagiae serovar copenhageni (strain Fiocruz L1-130).